The chain runs to 212 residues: Protein Thf1 (212 aa).

The stretch at 179 to 201 (ERMEQAVELMQETLAADRRKKEK) forms a coiled coil.

The protein belongs to the THF1 family.

Its function is as follows. May be involved in photosynthetic membrane biogenesis. The polypeptide is Protein Thf1 (Parasynechococcus marenigrum (strain WH8102)).